The chain runs to 314 residues: tRNA pseudouridine synthase B (314 aa).

His43 lines the substrate pocket. Asp48 acts as the Nucleophile in catalysis. 3 residues coordinate substrate: Tyr76, Tyr179, and Leu200.

Belongs to the pseudouridine synthase TruB family. Type 1 subfamily.

It carries out the reaction uridine(55) in tRNA = pseudouridine(55) in tRNA. Responsible for synthesis of pseudouridine from uracil-55 in the psi GC loop of transfer RNAs. The sequence is that of tRNA pseudouridine synthase B from Salmonella typhi.